The primary structure comprises 984 residues: Ephrin type-B receptor 1 (984 aa).

Residues 1–17 form the signal peptide; the sequence is MALDYLLLLLLASAVAA. Residues 18 to 540 are Extracellular-facing; the sequence is MEETLMDTRT…YKSELREQLP (523 aa). Positions 19–201 constitute an Eph LBD domain; that stretch reads EETLMDTRTA…FFKKCPSIVQ (183 aa). Fibronectin type-III domains lie at 322 to 432 and 433 to 528; these read VPSG…TNQA and APST…TLTD. N-linked (GlcNAc...) asparagine glycans are attached at residues N334, N426, and N480. A helical transmembrane segment spans residues 541-563; the sequence is LIAGSAAAGVVFVVSLVAISIVC. The Cytoplasmic portion of the chain corresponds to 564–984; that stretch reads SRKRAYSKEA…QISQSPTAMA (421 aa). Y600 is subject to Phosphotyrosine. The region spanning 619-882 is the Protein kinase domain; sequence VKIEEVIGAG…EIVNTLDKMI (264 aa). Residues 625–633 and K651 contribute to the ATP site; that span reads IGAGEFGEV. The Proton acceptor role is filled by D744. The SAM domain occupies 911 to 975; it reads TAFTTVDDWL…LNSIHSMRVQ (65 aa). Residue Y928 is modified to Phosphotyrosine; by autocatalysis. Residues 982-984 carry the PDZ-binding motif; that stretch reads AMA.

This sequence belongs to the protein kinase superfamily. Tyr protein kinase family. Ephrin receptor subfamily. In terms of assembly, heterotetramer upon binding of the ligand. The heterotetramer is composed of an ephrin dimer and a receptor dimer. Oligomerization is probably required to induce biological responses. Interacts with EPHB6; transphosphorylates EPHB6 to form an active signaling complex. Interacts with PICK1. Interacts (through Tyr-594) with NCK1 (via SH2 domain); activates the JUN cascade to regulate cell adhesion. The ligand-activated form interacts (through Tyr-928) with GRB7 and GRB10 (via SH2 domains). The ligand-activated form interacts (residues within the catalytic domain) with GRB2 (via SH2 domain). Interacts with GRB2, SHC1 and SRC; activates the MAPK/ERK cascade to regulate cell migration. Interacts with CBL; regulates receptor degradation through ubiquitination. Interacts with ACP1. Post-translationally, phosphorylated. Autophosphorylation is stimulated by the ligand EFNB1. Required for interaction with SH2 domain-containing interactors, for activation of the MAPK/ERK and JUN signaling cascades and for ubiquitination by CBL. Ubiquitinated; (EFNB1)ligand-induced poly- and/or multi-ubiquitination by CBL is regulated by SRC and leads to lysosomal degradation. As to expression, preferentially expressed in brain.

It is found in the cell membrane. It localises to the early endosome membrane. The protein resides in the cell projection. Its subcellular location is the dendrite. It catalyses the reaction L-tyrosyl-[protein] + ATP = O-phospho-L-tyrosyl-[protein] + ADP + H(+). In terms of biological role, receptor tyrosine kinase which binds promiscuously transmembrane ephrin-B family ligands residing on adjacent cells, leading to contact-dependent bidirectional signaling into neighboring cells. The signaling pathway downstream of the receptor is referred to as forward signaling while the signaling pathway downstream of the ephrin ligand is referred to as reverse signaling. Cognate/functional ephrin ligands for this receptor include EFNB1, EFNB2 and EFNB3. During nervous system development, regulates retinal axon guidance redirecting ipsilaterally ventrotemporal retinal ganglion cells axons at the optic chiasm midline. This probably requires repulsive interaction with EFNB2. In the adult nervous system together with EFNB3, regulates chemotaxis, proliferation and polarity of the hippocampus neural progenitors. In addition to its role in axon guidance also plays an important redundant role with other ephrin-B receptors in development and maturation of dendritic spines and synapse formation. May also regulate angiogenesis. More generally, may play a role in targeted cell migration and adhesion. Upon activation by EFNB1 and probably other ephrin-B ligands activates the MAPK/ERK and the JNK signaling cascades to regulate cell migration and adhesion respectively. Involved in the maintenance of the pool of satellite cells (muscle stem cells) by promoting their self-renewal and reducing their activation and differentiation. This chain is Ephrin type-B receptor 1 (EPHB1), found in Homo sapiens (Human).